Consider the following 1004-residue polypeptide: Putative helicase MOV-10 (1004 aa).

Lys148 is subject to N6-acetyllysine. Position 254 is a phosphothreonine (Thr254). Ser433 is modified (phosphoserine). An ATP-binding site is contributed by 525 to 532; the sequence is GPPGTGKT. The DEAG box signature appears at 646–649; it reads DEAG. The segment at 922-966 is interaction with AGO2 and APOBEC3G; it reads NPLLLGHDPDWKTFLEFCKENGGYTGCPFPAKLDLQQGQDLLQGL. Residues 966–1004 form a disordered region; sequence LSKLSPSTSGPRRHQNLPQEREGEGGLPLQVEPEWRNEL. Ser970 carries the phosphoserine modification.

This sequence belongs to the DNA2/NAM7 helicase family. SDE3 subfamily. In terms of assembly, interacts with DICER1, AGO2, TARBP2, EIF6 and RPL7A (60S ribosome subunit); they form a large RNA-induced silencing complex (RISC). Interacts with APOBEC3G in an RNA-dependent manner. Interacts with TRIM71 (via NHL repeats) in an RNA-dependent manner. Interacts with both protein products of LIRE1, ORF1p and ORF2p. Interacts with TUT4 and, to a lesser extent, TUT7; the interactions are RNA-dependent. Interacts with AGO2, TNRC6B and UPF1; the interactions are direct and RNA-dependent. Interacts with FMR1; this interaction is direct, occurs in an RNA-dependent manner on polysomes and induces association of MOV10 with RNAs. Interacts with SHFL; the interaction increases in presence of RNA. Interacts with DHX34; the interaction is RNA-independent. Interacts with RBM46. Post-translationally, ubiquitinated by the DCX(DCAF12) complex that specifically recognizes the glutamate-leucine (Glu-Leu) degron at the C-terminus, leading to its degradation.

It localises to the cytoplasm. It is found in the P-body. Its subcellular location is the nucleus. The protein resides in the cytoplasmic ribonucleoprotein granule. The protein localises to the stress granule. The catalysed reaction is ATP + H2O = ADP + phosphate + H(+). Functionally, 5' to 3' RNA helicase that is involved in a number of cellular roles ranging from mRNA metabolism and translation, modulation of viral infectivity, inhibition of retrotransposition, or regulation of synaptic transmission. Plays an important role in innate antiviral immunity by promoting type I interferon production. Mechanistically, specifically uses IKKepsilon/IKBKE as the mediator kinase for IRF3 activation. Contributes to UPF1 mRNA target degradation by translocation along 3' UTRs. Required for microRNA (miRNA)-mediated gene silencing by the RNA-induced silencing complex (RISC). Required for both miRNA-mediated translational repression and miRNA-mediated cleavage of complementary mRNAs by RISC. In cooperation with FMR1, regulates miRNA-mediated translational repression by AGO2. Restricts retrotransposition of long interspersed element-1 (LINE-1) in cooperation with TUT4 and TUT7 counteracting the RNA chaperonne activity of L1RE1. Facilitates LINE-1 uridylation by TUT4 and TUT7. Required for embryonic viability and for normal central nervous system development and function. Plays two critical roles in early brain development: suppresses retroelements in the nucleus by directly inhibiting cDNA synthesis, while regulates cytoskeletal mRNAs to influence neurite outgrowth in the cytosol. May function as a messenger ribonucleoprotein (mRNP) clearance factor. The protein is Putative helicase MOV-10 (Mov10) of Mus musculus (Mouse).